Consider the following 366-residue polypeptide: UDP-N-acetylglucosamine--N-acetylmuramyl-(pentapeptide) pyrophosphoryl-undecaprenol N-acetylglucosamine transferase (366 aa).

UDP-N-acetyl-alpha-D-glucosamine-binding positions include 17-19, Asn129, Arg169, Ser195, Ile251, 270-275, and Gln296; these read TGG and ALTVSE.

The protein belongs to the glycosyltransferase 28 family. MurG subfamily.

The protein localises to the cell inner membrane. It catalyses the reaction di-trans,octa-cis-undecaprenyl diphospho-N-acetyl-alpha-D-muramoyl-L-alanyl-D-glutamyl-meso-2,6-diaminopimeloyl-D-alanyl-D-alanine + UDP-N-acetyl-alpha-D-glucosamine = di-trans,octa-cis-undecaprenyl diphospho-[N-acetyl-alpha-D-glucosaminyl-(1-&gt;4)]-N-acetyl-alpha-D-muramoyl-L-alanyl-D-glutamyl-meso-2,6-diaminopimeloyl-D-alanyl-D-alanine + UDP + H(+). It participates in cell wall biogenesis; peptidoglycan biosynthesis. In terms of biological role, cell wall formation. Catalyzes the transfer of a GlcNAc subunit on undecaprenyl-pyrophosphoryl-MurNAc-pentapeptide (lipid intermediate I) to form undecaprenyl-pyrophosphoryl-MurNAc-(pentapeptide)GlcNAc (lipid intermediate II). This chain is UDP-N-acetylglucosamine--N-acetylmuramyl-(pentapeptide) pyrophosphoryl-undecaprenol N-acetylglucosamine transferase, found in Shewanella denitrificans (strain OS217 / ATCC BAA-1090 / DSM 15013).